The chain runs to 105 residues: UPF0145 protein lpg0197 (105 aa).

This sequence belongs to the UPF0145 family.

In Legionella pneumophila subsp. pneumophila (strain Philadelphia 1 / ATCC 33152 / DSM 7513), this protein is UPF0145 protein lpg0197.